We begin with the raw amino-acid sequence, 59 residues long: UPF0509 protein KPN78578_12530 (59 aa).

The protein belongs to the UPF0509 family.

The protein is UPF0509 protein KPN78578_12530 of Klebsiella pneumoniae subsp. pneumoniae (strain ATCC 700721 / MGH 78578).